The primary structure comprises 305 residues: UDP-3-O-acyl-N-acetylglucosamine deacetylase (305 aa).

Residues H78, H237, and D241 each contribute to the Zn(2+) site. H264 acts as the Proton donor in catalysis.

This sequence belongs to the LpxC family. The cofactor is Zn(2+).

The enzyme catalyses a UDP-3-O-[(3R)-3-hydroxyacyl]-N-acetyl-alpha-D-glucosamine + H2O = a UDP-3-O-[(3R)-3-hydroxyacyl]-alpha-D-glucosamine + acetate. It functions in the pathway glycolipid biosynthesis; lipid IV(A) biosynthesis; lipid IV(A) from (3R)-3-hydroxytetradecanoyl-[acyl-carrier-protein] and UDP-N-acetyl-alpha-D-glucosamine: step 2/6. In terms of biological role, catalyzes the hydrolysis of UDP-3-O-myristoyl-N-acetylglucosamine to form UDP-3-O-myristoylglucosamine and acetate, the committed step in lipid A biosynthesis. The protein is UDP-3-O-acyl-N-acetylglucosamine deacetylase of Paraburkholderia xenovorans (strain LB400).